We begin with the raw amino-acid sequence, 372 residues long: ATP phosphoribosyltransferase regulatory subunit (372 aa).

It belongs to the class-II aminoacyl-tRNA synthetase family. HisZ subfamily. In terms of assembly, heteromultimer composed of HisG and HisZ subunits.

It localises to the cytoplasm. It functions in the pathway amino-acid biosynthesis; L-histidine biosynthesis; L-histidine from 5-phospho-alpha-D-ribose 1-diphosphate: step 1/9. Its function is as follows. Required for the first step of histidine biosynthesis. May allow the feedback regulation of ATP phosphoribosyltransferase activity by histidine. This is ATP phosphoribosyltransferase regulatory subunit from Allorhizobium ampelinum (strain ATCC BAA-846 / DSM 112012 / S4) (Agrobacterium vitis (strain S4)).